Here is a 300-residue protein sequence, read N- to C-terminus: Sulfate adenylyltransferase subunit 2 (300 aa).

Residues Arg281–Phe300 form a disordered region.

Belongs to the PAPS reductase family. CysD subfamily. Heterodimer composed of CysD, the smaller subunit, and CysN.

The catalysed reaction is sulfate + ATP + H(+) = adenosine 5'-phosphosulfate + diphosphate. The protein operates within sulfur metabolism; hydrogen sulfide biosynthesis; sulfite from sulfate: step 1/3. Its function is as follows. With CysN forms the ATP sulfurylase (ATPS) that catalyzes the adenylation of sulfate producing adenosine 5'-phosphosulfate (APS) and diphosphate, the first enzymatic step in sulfur assimilation pathway. APS synthesis involves the formation of a high-energy phosphoric-sulfuric acid anhydride bond driven by GTP hydrolysis by CysN coupled to ATP hydrolysis by CysD. The protein is Sulfate adenylyltransferase subunit 2 of Brucella abortus (strain 2308).